The following is a 177-amino-acid chain: MSRIGKKAVAIPSGVQVTLAGQTVTVKGPKGQLSWTIADEVEVKQEGAELLLAPRVDTKRAKGMWGLSRTLVANMVHGVTVGFEESLELVGVGYRAAMKGTALSLQLGFSHDVDVAAPAGVTFAVPKQTEIKIAGIDKQAVGEIAAKIRRIRPPEPYKGKGVRYAGEKVRRKEGKKK.

A disordered region spans residues 157–177 (YKGKGVRYAGEKVRRKEGKKK).

This sequence belongs to the universal ribosomal protein uL6 family. In terms of assembly, part of the 50S ribosomal subunit.

In terms of biological role, this protein binds to the 23S rRNA, and is important in its secondary structure. It is located near the subunit interface in the base of the L7/L12 stalk, and near the tRNA binding site of the peptidyltransferase center. The polypeptide is Large ribosomal subunit protein uL6 (Caulobacter vibrioides (strain ATCC 19089 / CIP 103742 / CB 15) (Caulobacter crescentus)).